We begin with the raw amino-acid sequence, 446 residues long: Maltoporin (446 aa).

A signal peptide spans 1–25; sequence MMITLRKLPLAVAVAAGVMSAQAMA.

It belongs to the porin LamB (TC 1.B.3) family. In terms of assembly, homotrimer formed of three 18-stranded antiparallel beta-barrels, containing three independent channels.

It is found in the cell outer membrane. The catalysed reaction is beta-maltose(in) = beta-maltose(out). Its function is as follows. Involved in the transport of maltose and maltodextrins. The protein is Maltoporin of Escherichia coli O8 (strain IAI1).